A 464-amino-acid polypeptide reads, in one-letter code: V-type ATP synthase beta chain (464 aa).

Belongs to the ATPase alpha/beta chains family.

Its function is as follows. Produces ATP from ADP in the presence of a proton gradient across the membrane. The V-type beta chain is a regulatory subunit. The polypeptide is V-type ATP synthase beta chain (Streptococcus gordonii (strain Challis / ATCC 35105 / BCRC 15272 / CH1 / DL1 / V288)).